The chain runs to 351 residues: Probable glucuronosyltransferase Os10g0205300 (351 aa).

Residues 1 to 11 (MAAPPCPPRRP) are Cytoplasmic-facing. A helical; Signal-anchor for type II membrane protein transmembrane segment spans residues 12–32 (ISAPCFLLCFLLGFVAGLFPF). At 33–351 (AHRHLHLDLH…PLKKEARPLL (319 aa)) the chain is on the lumenal side. Positions 138-169 (SSPVPDAPQDRPRRRGRRQDRPAVDSRARQRN) are disordered. Over residues 156-169 (QDRPAVDSRARQRN) the composition is skewed to basic and acidic residues. A glycan (N-linked (GlcNAc...) asparagine) is linked at N259.

It belongs to the glycosyltransferase 43 family.

The protein localises to the golgi apparatus membrane. Its function is as follows. Involved in the synthesis of glucuronoxylan hemicellulose in secondary cell walls. This is Probable glucuronosyltransferase Os10g0205300 from Oryza sativa subsp. japonica (Rice).